Here is a 188-residue protein sequence, read N- to C-terminus: dCTP deaminase (188 aa).

DCTP contacts are provided by residues 111–116 (KSTYAR), 135–137 (TLE), Gln156, Tyr170, and Gln180. The active-site Proton donor/acceptor is Glu137.

This sequence belongs to the dCTP deaminase family. As to quaternary structure, homotrimer.

The enzyme catalyses dCTP + H2O + H(+) = dUTP + NH4(+). The protein operates within pyrimidine metabolism; dUMP biosynthesis; dUMP from dCTP (dUTP route): step 1/2. Functionally, catalyzes the deamination of dCTP to dUTP. The protein is dCTP deaminase of Cupriavidus pinatubonensis (strain JMP 134 / LMG 1197) (Cupriavidus necator (strain JMP 134)).